The primary structure comprises 172 residues: Cold-inducible RNA-binding protein (172 aa).

The RRM domain occupies 6-84 (GKLFVGGLSF…RQIRVDQAGK (79 aa)). A disordered region spans residues 69–172 (GKSVDGRQIR…SYDSYATHNE (104 aa)). 2 stretches are compositionally biased toward gly residues: residues 93–106 (YRGG…FFRG) and 114–125 (FSRGGGDRGYGG). Ser-130, Ser-138, Ser-146, Ser-156, Ser-159, and Ser-163 each carry phosphoserine. The span at 138–172 (SRDYYSSRSQSGGYSDRSSGGSYRDSYDSYATHNE) shows a compositional bias: low complexity.

In terms of assembly, interacts with EIF4G1. Associates with ribosomes. Post-translationally, methylated on arginine residues. Methylation of the RGG motifs is a prerequisite for recruitment into SGs. Phosphorylated by CK2, GSK3A and GSK3B. Phosphorylation by GSK3B increases RNA-binding activity to the TXN 3'-UTR transcript upon exposure to UV radiation.

The protein resides in the nucleus. It is found in the nucleoplasm. The protein localises to the cytoplasm. Functionally, cold-inducible mRNA binding protein that plays a protective role in the genotoxic stress response by stabilizing transcripts of genes involved in cell survival. Acts as a translational activator. Seems to play an essential role in cold-induced suppression of cell proliferation. Binds specifically to the 3'-untranslated regions (3'-UTRs) of stress-responsive transcripts RPA2 and TXN. Acts as a translational repressor. Promotes assembly of stress granules (SGs), when overexpressed. In Pongo abelii (Sumatran orangutan), this protein is Cold-inducible RNA-binding protein (CIRBP).